Reading from the N-terminus, the 29-residue chain is Glucagon (29 aa).

The protein belongs to the glucagon family.

The protein localises to the secreted. Functionally, glucagon plays a key role in glucose metabolism and homeostasis. Regulates blood glucose by increasing gluconeogenesis and decreasing glycolysis. In Polypterus senegalus (Senegal bichir), this protein is Glucagon (gcg).